Consider the following 857-residue polypeptide: Leucine--tRNA ligase (857 aa).

The short motif at 42 to 52 is the 'HIGH' region element; that stretch reads PYPSGTLHMGH. The 'KMSKS' region signature appears at 616–620; that stretch reads KMSKS. Residue Lys619 participates in ATP binding.

The protein belongs to the class-I aminoacyl-tRNA synthetase family.

It is found in the cytoplasm. It catalyses the reaction tRNA(Leu) + L-leucine + ATP = L-leucyl-tRNA(Leu) + AMP + diphosphate. This is Leucine--tRNA ligase from Parasynechococcus marenigrum (strain WH8102).